The sequence spans 346 residues: MIILGFESSCDETGVAAVCTERGLLAHALHTQIAMHQEYGGVVPELASRDHIRRVVPLTRQVLAEAGLTLADVGAVAYTAGPGLAGALLVGASVAQALAWSRALPAIGIHHLEGHLLSPLLAEPRPEFPFVALLVSGGHTQLMRVDGVGRYELLGETLDDAAGEAFDKSAKLMGLGYPGGPALARLAEQGDASRYDLPRPMLHSGDLDFSFSGLKTAVLTRVKAATRDGGELGEQDRADLAAATQAAIVEVLAAKAIRALKQTGLRRLVVAGGVGANALLRAHLARALKPLRAEAYFPPLSLCTDNGAMIAFAAAERVKAGLADLREGDHAFTVRPRWDLADIQAG.

Fe cation is bound by residues histidine 111 and histidine 115. Substrate is bound by residues 134–138 (LVSGG), aspartate 167, glycine 180, and asparagine 277. Aspartate 305 contacts Fe cation.

The protein belongs to the KAE1 / TsaD family. Fe(2+) is required as a cofactor.

It localises to the cytoplasm. The catalysed reaction is L-threonylcarbamoyladenylate + adenosine(37) in tRNA = N(6)-L-threonylcarbamoyladenosine(37) in tRNA + AMP + H(+). In terms of biological role, required for the formation of a threonylcarbamoyl group on adenosine at position 37 (t(6)A37) in tRNAs that read codons beginning with adenine. Is involved in the transfer of the threonylcarbamoyl moiety of threonylcarbamoyl-AMP (TC-AMP) to the N6 group of A37, together with TsaE and TsaB. TsaD likely plays a direct catalytic role in this reaction. In Bordetella bronchiseptica (strain ATCC BAA-588 / NCTC 13252 / RB50) (Alcaligenes bronchisepticus), this protein is tRNA N6-adenosine threonylcarbamoyltransferase.